Consider the following 251-residue polypeptide: Putative F-box protein PP2-B12 (251 aa).

Positions 1 to 46 (MNFLDLPEECIATMISFTSPFDACRISAVSKLLRSAADSNTTWERF) constitute an F-box domain.

The sequence is that of Putative F-box protein PP2-B12 (PP2B12) from Arabidopsis thaliana (Mouse-ear cress).